We begin with the raw amino-acid sequence, 640 residues long: Serine/threonine-protein phosphatase with EF-hands 1 (640 aa).

The 30-residue stretch at 16–45 folds into the IQ domain; the sequence is VVRAALIIQNWYRRYRARLSARQHYALAIF. Residues 122 to 445 are catalytic; sequence INLLLQAFKQ…PQFFQYQVTS (324 aa). Positions 173, 175, 202, and 234 each coordinate Mn(2+). Histidine 235 (proton donor) is an active-site residue. Mn(2+) is bound by residues histidine 286 and histidine 393. EF-hand domains are found at residues 473–508, 556–591, and 596–631; these read ARKT…ILGL, RYRS…FNAH, and IDDS…VHKY. Ca(2+)-binding residues include aspartate 569, aspartate 571, serine 573, glutamate 580, aspartate 609, asparagine 611, aspartate 613, asparagine 615, and glutamate 620.

The protein belongs to the PPP phosphatase family. Requires Mn(2+) as cofactor. It depends on Mg(2+) as a cofactor.

It carries out the reaction O-phospho-L-seryl-[protein] + H2O = L-seryl-[protein] + phosphate. It catalyses the reaction O-phospho-L-threonyl-[protein] + H2O = L-threonyl-[protein] + phosphate. Its activity is regulated as follows. Activated by calcium. May have a role in the recovery or adaptation response of photoreceptors. May have a role in development. This is Serine/threonine-protein phosphatase with EF-hands 1 (Ppef1) from Rattus norvegicus (Rat).